The primary structure comprises 180 residues: Calcium-binding protein E (180 aa).

EF-hand domains follow at residues 3 to 38 (KVEA…NSNI), 40 to 76 (DPLA…KKIK), 85 to 120 (ALRS…DPDF), and 139 to 174 (RAKS…HPEF). D16, D18, D20, N22, and E27 together coordinate Ca(2+). Ca(2+) contacts are provided by D98, D100, D102, E109, D152, D154, N156, K158, and E163.

This chain is Calcium-binding protein E (cbpE), found in Dictyostelium discoideum (Social amoeba).